We begin with the raw amino-acid sequence, 468 residues long: Glutamate--tRNA ligase (468 aa).

The short motif at 12 to 22 (PSPTGFIHLGN) is the 'HIGH' region element. The 'KMSKS' region motif lies at 244 to 248 (KMSKR). Lys247 lines the ATP pocket.

This sequence belongs to the class-I aminoacyl-tRNA synthetase family. Glutamate--tRNA ligase type 1 subfamily. As to quaternary structure, monomer.

Its subcellular location is the cytoplasm. The catalysed reaction is tRNA(Glu) + L-glutamate + ATP = L-glutamyl-tRNA(Glu) + AMP + diphosphate. In terms of biological role, catalyzes the attachment of glutamate to tRNA(Glu) in a two-step reaction: glutamate is first activated by ATP to form Glu-AMP and then transferred to the acceptor end of tRNA(Glu). The polypeptide is Glutamate--tRNA ligase (Polynucleobacter asymbioticus (strain DSM 18221 / CIP 109841 / QLW-P1DMWA-1) (Polynucleobacter necessarius subsp. asymbioticus)).